Consider the following 544-residue polypeptide: MAKSIIFSEEARRALEHGMDILAEAVAVTLGPKGRNVVLEKKFGAPQIINDGVTIAKEIELEDHIENTGVSLIRQAASKTNDTAGDGTTTATVLAHAMVKEGLKNVAAGANPIALKRGIDKAVKFLVDKIAEHARPVEDSKAIAQVAAISAGNDEEVGRMIAEAMDKVGREGVISLEEGKSMTTELEVTEGMRFDKGYISPYFVTDTERMEAVLENPYILITDKKITLVQDLVPVLEQVARAGRPLLIIAEDIEKEALATLVVNKLRGVLSVVAVKAPGFGDRRKAMLEDIAILTGGEVISEERGLKLENARLDSFGTARRVTVTKDNTTIVAEGNEAAVKARCEQIRRQIEETDSTYDKEKLQERLAKLSGGVAVIKVGAATETEMKDRKLRLEDAINATKAAVEEGIVPGGGTTLAHLIPVVTEWAQANLSGDELVGANLVARALGAPLRRIAENAGQNGSIVLERVKDKPFNTGYDAQNDAFVDMFEAGIVDPAKVTRSALQNAASIAGMVLTTEAIVVDKPEPKTNTPASSGSGMSDYDY.

ATP-binding positions include 29–32, 86–90, glycine 413, and aspartate 495; these read TLGP and DGTTT. The disordered stretch occupies residues 525-544; the sequence is PEPKTNTPASSGSGMSDYDY. A compositionally biased stretch (polar residues) spans 528–538; it reads KTNTPASSGSG.

This sequence belongs to the chaperonin (HSP60) family. Forms a cylinder of 14 subunits composed of two heptameric rings stacked back-to-back. Interacts with the co-chaperonin GroES.

It localises to the cytoplasm. The enzyme catalyses ATP + H2O + a folded polypeptide = ADP + phosphate + an unfolded polypeptide.. Together with its co-chaperonin GroES, plays an essential role in assisting protein folding. The GroEL-GroES system forms a nano-cage that allows encapsulation of the non-native substrate proteins and provides a physical environment optimized to promote and accelerate protein folding. This chain is Chaperonin GroEL 1, found in Synechococcus sp. (strain JA-2-3B'a(2-13)) (Cyanobacteria bacterium Yellowstone B-Prime).